The following is a 141-amino-acid chain: N,N-dimethylformamidase alpha subunit (141 aa).

Heterotetramer of two DmfA1 (alpha) and two DmfA2 (beta) subunits.

It catalyses the reaction N,N-dimethylformamide + H2O = dimethylamine + formate. Its function is as follows. Hydrolyzes N,N-dimethylformamide, and to a lesser extent N,N-dimethylacetamide and N,N-diethylacetamide. Has no activity against the substituted amides N-methylformamide, N-ethylformamide, N-ethylformamide and N-methylacetamide or the unsubstituted amides formamide, nicotinamide, acetoamide, benzamide, acetamide and acrylamide. This chain is N,N-dimethylformamidase alpha subunit, found in Paracoccus aminophilus.